We begin with the raw amino-acid sequence, 315 residues long: ATP synthase gamma chain (315 aa).

As to quaternary structure, F-type ATPases have 2 components, CF(1) - the catalytic core - and CF(0) - the membrane proton channel. CF(1) has five subunits: alpha(3), beta(3), gamma(1), delta(1), epsilon(1). CF(0) has four main subunits: a(1), b(1), b'(1) and c(9-12).

It is found in the cellular thylakoid membrane. In terms of biological role, produces ATP from ADP in the presence of a proton gradient across the membrane. The gamma chain is believed to be important in regulating ATPase activity and the flow of protons through the CF(0) complex. The complex from the organism is particularly stable to disruption and remains functional after 6 hrs at 55 degrees Celsius. This is ATP synthase gamma chain from Thermosynechococcus vestitus (strain NIES-2133 / IAM M-273 / BP-1).